Reading from the N-terminus, the 567-residue chain is WD repeat-containing protein 20 (567 aa).

N-acetylalanine is present on Ala2. 4 WD repeats span residues 147 to 187 (IDKS…GTTA), 216 to 257 (VGEG…GTMK), 258 to 297 (SYFGGLLCLCWSPDGKYIVTGGEDDLVTVWSFLDCRVIAR), and 345 to 389 (STQS…LFPH). A phosphoserine mark is found at Ser355 and Ser358. Residues 408–441 (PAGSNGSAVTTPGNSVPPPLPRSNSLPHSAVSNA) form a disordered region. Composition is skewed to polar residues over residues 411 to 421 (SNGSAVTTPGN) and 429 to 441 (RSNSLPHSAVSNA). 3 positions are modified to phosphoserine: Ser430, Ser432, and Ser463. Residues 468–481 (KERHHEKDRKRNHS) show a composition bias toward basic residues. The interval 468–493 (KERHHEKDRKRNHSMGHISSKSSDKL) is disordered. A WD 5 repeat occupies 529 to 566 (IAHERLTVLVFLEDCIVTACQEGFICTWARPGKVSKFQ).

Interacts with USP12; promotes translocation of USP12/WDR20 to the plasma membrane. Component of the USP12/WDR20/WDR48 deubiquitinating complex. Interacts with USP46; contributes to the cytoplasmic localization of the USP46/WDR20 complex. Component of the USP12/DMWD/WDR48 deubiquitinating complex.

The protein localises to the cytoplasm. Its subcellular location is the nucleus. Functionally, regulator of deubiquitinating complexes. Activates deubiquitinating activity of complexes containing USP12. Anchors at the base of the ubiquitin-contacting loop of USP12 and remotely modulates the catalytic center of the enzyme. Regulates shuttling of complexes containing USP12 between the plasma membrane, cytoplasm and nucleus. The protein is WD repeat-containing protein 20 (Wdr20) of Mus musculus (Mouse).